The sequence spans 306 residues: Maltose operon periplasmic protein (306 aa).

Positions 1 to 22 (MKMNKSLIVLCLSAGLLASAPG) form a signal peptide, or 26.

The protein to S.typhimurium MalM.

The protein resides in the periplasm. Functionally, not yet known. Might function in the uptake of a still unidentified substrate. This is Maltose operon periplasmic protein (malM) from Escherichia coli (strain K12).